Reading from the N-terminus, the 69-residue chain is DNA-directed RNA polymerase subunit epsilon (69 aa).

This sequence belongs to the RNA polymerase subunit epsilon family. RNAP is composed of a core of 2 alpha, a beta and a beta' subunit. The core is associated with a delta subunit, and at least one of epsilon or omega. When a sigma factor is associated with the core the holoenzyme is formed, which can initiate transcription.

It carries out the reaction RNA(n) + a ribonucleoside 5'-triphosphate = RNA(n+1) + diphosphate. Functionally, a non-essential component of RNA polymerase (RNAP). This Lysinibacillus sphaericus (strain C3-41) protein is DNA-directed RNA polymerase subunit epsilon.